The chain runs to 155 residues: uncharacterized protein (155 aa).

In terms of domain architecture, HTH asnC-type spans 4-65; sequence IDEIDEVIVR…VVDPSFFGEF (62 aa). Positions 23 to 42 form a DNA-binding region, H-T-H motif; the sequence is LTELGRKVGLTASAVKNRIE.

This is an uncharacterized protein from Pyrococcus horikoshii (strain ATCC 700860 / DSM 12428 / JCM 9974 / NBRC 100139 / OT-3).